A 436-amino-acid chain; its full sequence is UPF0597 protein YhaM (436 aa).

The protein belongs to the UPF0597 family.

This Salmonella newport (strain SL254) protein is UPF0597 protein YhaM.